Consider the following 340-residue polypeptide: DNA-directed RNA polymerase subunit alpha (340 aa).

The interval 1-233 (MVREEVAVST…DLFIPFLHAE (233 aa)) is alpha N-terminal domain (alpha-NTD). Positions 266-340 (KKEIALKCIF…GIDLPKNKRF (75 aa)) are alpha C-terminal domain (alpha-CTD).

It belongs to the RNA polymerase alpha chain family. In plastids the minimal PEP RNA polymerase catalytic core is composed of four subunits: alpha, beta, beta', and beta''. When a (nuclear-encoded) sigma factor is associated with the core the holoenzyme is formed, which can initiate transcription.

It localises to the plastid. The protein resides in the chloroplast. It catalyses the reaction RNA(n) + a ribonucleoside 5'-triphosphate = RNA(n+1) + diphosphate. DNA-dependent RNA polymerase catalyzes the transcription of DNA into RNA using the four ribonucleoside triphosphates as substrates. The protein is DNA-directed RNA polymerase subunit alpha of Calycanthus floridus var. glaucus (Eastern sweetshrub).